Reading from the N-terminus, the 603-residue chain is DNA mismatch repair protein MutL (603 aa).

Belongs to the DNA mismatch repair MutL/HexB family.

Its function is as follows. This protein is involved in the repair of mismatches in DNA. It is required for dam-dependent methyl-directed DNA mismatch repair. May act as a 'molecular matchmaker', a protein that promotes the formation of a stable complex between two or more DNA-binding proteins in an ATP-dependent manner without itself being part of a final effector complex. In Nitrobacter hamburgensis (strain DSM 10229 / NCIMB 13809 / X14), this protein is DNA mismatch repair protein MutL.